The sequence spans 446 residues: Aspartokinase (446 aa).

In terms of domain architecture, RPE1 insert spans 250–294 (IPLVKSTYMEESALNTKHSTKIDIPEDASGSTYKLPIELALQNRY).

This sequence belongs to the aspartokinase family.

It catalyses the reaction L-aspartate + ATP = 4-phospho-L-aspartate + ADP. It functions in the pathway amino-acid biosynthesis; L-lysine biosynthesis via DAP pathway; (S)-tetrahydrodipicolinate from L-aspartate: step 1/4. The protein operates within amino-acid biosynthesis; L-methionine biosynthesis via de novo pathway; L-homoserine from L-aspartate: step 1/3. Its pathway is amino-acid biosynthesis; L-threonine biosynthesis; L-threonine from L-aspartate: step 1/5. This is Aspartokinase (lysC) from Rickettsia prowazekii (strain Madrid E).